The primary structure comprises 64 residues: UPF0434 protein MADE_1009415 (64 aa).

Belongs to the UPF0434 family.

This chain is UPF0434 protein MADE_1009415, found in Alteromonas mediterranea (strain DSM 17117 / CIP 110805 / LMG 28347 / Deep ecotype).